The primary structure comprises 84 residues: Tenecin-1 (84 aa).

Positions 1–19 are cleaved as a signal peptide; sequence MKLTIFALVACFFILQIAA. Positions 20 to 41 are excised as a propeptide; the sequence is FPLEEAATAEEIEQGEHIRVKR. 3 disulfides stabilise this stretch: cysteine 44-cysteine 75, cysteine 61-cysteine 81, and cysteine 65-cysteine 83.

The protein belongs to the invertebrate defensin family. Type 1 subfamily.

It localises to the secreted. Its function is as follows. Bactericidal protein produced in response to injury. It is cytotoxic to Gram-positive bacteria. This chain is Tenecin-1, found in Tenebrio molitor (Yellow mealworm beetle).